The following is a 212-amino-acid chain: Cytidylate kinase (212 aa).

9–17 contacts ATP; the sequence is GPAAAGKGT.

Belongs to the cytidylate kinase family. Type 1 subfamily.

It localises to the cytoplasm. It catalyses the reaction CMP + ATP = CDP + ADP. The enzyme catalyses dCMP + ATP = dCDP + ADP. The sequence is that of Cytidylate kinase from Sinorhizobium medicae (strain WSM419) (Ensifer medicae).